The following is a 373-amino-acid chain: 8-amino-7-oxononanoate synthase (373 aa).

R16 lines the substrate pocket. Position 93–94 (93–94) interacts with pyridoxal 5'-phosphate; the sequence is GF. A substrate-binding site is contributed by H118. Pyridoxal 5'-phosphate contacts are provided by residues S165, 190 to 193, and 222 to 225; these read DEAH and TFSK. K225 is modified (N6-(pyridoxal phosphate)lysine). T334 is a binding site for substrate.

The protein belongs to the class-II pyridoxal-phosphate-dependent aminotransferase family. BioF subfamily. Homodimer. The cofactor is pyridoxal 5'-phosphate.

The catalysed reaction is 6-carboxyhexanoyl-[ACP] + L-alanine + H(+) = (8S)-8-amino-7-oxononanoate + holo-[ACP] + CO2. Its pathway is cofactor biosynthesis; biotin biosynthesis. Catalyzes the decarboxylative condensation of pimeloyl-[acyl-carrier protein] and L-alanine to produce 8-amino-7-oxononanoate (AON), [acyl-carrier protein], and carbon dioxide. The protein is 8-amino-7-oxononanoate synthase of Helicobacter pylori (strain J99 / ATCC 700824) (Campylobacter pylori J99).